The following is a 129-amino-acid chain: Large ribosomal subunit protein uL22 (129 aa).

Belongs to the universal ribosomal protein uL22 family. As to quaternary structure, part of the 50S ribosomal subunit.

This protein binds specifically to 23S rRNA; its binding is stimulated by other ribosomal proteins, e.g. L4, L17, and L20. It is important during the early stages of 50S assembly. It makes multiple contacts with different domains of the 23S rRNA in the assembled 50S subunit and ribosome. Functionally, the globular domain of the protein is located near the polypeptide exit tunnel on the outside of the subunit, while an extended beta-hairpin is found that lines the wall of the exit tunnel in the center of the 70S ribosome. The polypeptide is Large ribosomal subunit protein uL22 (Rhizobium meliloti (strain 1021) (Ensifer meliloti)).